The following is a 237-amino-acid chain: LexA repressor (237 aa).

The H-T-H motif DNA-binding region spans 26 to 46 (FDEMKEALDLRSKSGIHRLIT). A disordered region spans residues 84 to 110 (GFSPSVIEGGAQPKPSSRDLAPARSSG). Residues Ser-158 and Lys-196 each act as for autocatalytic cleavage activity in the active site.

It belongs to the peptidase S24 family. In terms of assembly, homodimer.

It carries out the reaction Hydrolysis of Ala-|-Gly bond in repressor LexA.. Functionally, represses a number of genes involved in the response to DNA damage (SOS response), including recA and lexA. In the presence of single-stranded DNA, RecA interacts with LexA causing an autocatalytic cleavage which disrupts the DNA-binding part of LexA, leading to derepression of the SOS regulon and eventually DNA repair. The chain is LexA repressor from Parvibaculum lavamentivorans (strain DS-1 / DSM 13023 / NCIMB 13966).